Here is a 237-residue protein sequence, read N- to C-terminus: Sugar fermentation stimulation protein homolog (237 aa).

The protein belongs to the SfsA family.

The polypeptide is Sugar fermentation stimulation protein homolog (Pseudomonas syringae pv. tomato (strain ATCC BAA-871 / DC3000)).